A 189-amino-acid chain; its full sequence is Threonylcarbamoyl-AMP synthase (189 aa).

The 183-residue stretch at 7 to 189 folds into the YrdC-like domain; it reads NPRVNYAANM…LLTGQVVRPS (183 aa).

The protein belongs to the SUA5 family. TsaC subfamily.

Its subcellular location is the cytoplasm. The enzyme catalyses L-threonine + hydrogencarbonate + ATP = L-threonylcarbamoyladenylate + diphosphate + H2O. Its function is as follows. Required for the formation of a threonylcarbamoyl group on adenosine at position 37 (t(6)A37) in tRNAs that read codons beginning with adenine. Catalyzes the conversion of L-threonine, HCO(3)(-)/CO(2) and ATP to give threonylcarbamoyl-AMP (TC-AMP) as the acyladenylate intermediate, with the release of diphosphate. The polypeptide is Threonylcarbamoyl-AMP synthase (Cellvibrio japonicus (strain Ueda107) (Pseudomonas fluorescens subsp. cellulosa)).